Here is a 490-residue protein sequence, read N- to C-terminus: ATP synthase subunit beta, chloroplastic (490 aa).

170–177 (GGAGVGKT) lines the ATP pocket.

The protein belongs to the ATPase alpha/beta chains family. In terms of assembly, F-type ATPases have 2 components, CF(1) - the catalytic core - and CF(0) - the membrane proton channel. CF(1) has five subunits: alpha(3), beta(3), gamma(1), delta(1), epsilon(1). CF(0) has four main subunits: a(1), b(1), b'(1) and c(9-12).

It is found in the plastid. The protein resides in the chloroplast thylakoid membrane. The catalysed reaction is ATP + H2O + 4 H(+)(in) = ADP + phosphate + 5 H(+)(out). Its function is as follows. Produces ATP from ADP in the presence of a proton gradient across the membrane. The catalytic sites are hosted primarily by the beta subunits. The polypeptide is ATP synthase subunit beta, chloroplastic (Ipomoea obscura (Obscure morning glory)).